The sequence spans 271 residues: D-methionine-binding lipoprotein MetQ (271 aa).

An N-terminal signal peptide occupies residues 1–22; sequence MAFKFKTFAAVGALIGSLALVG. Residue Cys23 is the site of N-palmitoyl cysteine attachment. Residue Cys23 is the site of S-diacylglycerol cysteine attachment.

The protein belongs to the NlpA lipoprotein family.

It is found in the cell membrane. Functionally, this protein is a component of a D-methionine permease, a binding protein-dependent, ATP-driven transport system. In Escherichia coli (strain K12), this protein is D-methionine-binding lipoprotein MetQ (metQ).